The chain runs to 94 residues: Co-chaperonin GroES (94 aa).

It belongs to the GroES chaperonin family. Heptamer of 7 subunits arranged in a ring. Interacts with the chaperonin GroEL.

It is found in the cytoplasm. Together with the chaperonin GroEL, plays an essential role in assisting protein folding. The GroEL-GroES system forms a nano-cage that allows encapsulation of the non-native substrate proteins and provides a physical environment optimized to promote and accelerate protein folding. GroES binds to the apical surface of the GroEL ring, thereby capping the opening of the GroEL channel. This Clostridium novyi (strain NT) protein is Co-chaperonin GroES.